Here is a 255-residue protein sequence, read N- to C-terminus: Aliphatic sulfonates import ATP-binding protein SsuB (255 aa).

Residues 12 to 233 (LLLNAVSKHY…RLGSVRLAEL (222 aa)) form the ABC transporter domain. 44-51 (GRSGGGKS) serves as a coordination point for ATP.

It belongs to the ABC transporter superfamily. Aliphatic sulfonates importer (TC 3.A.1.17.2) family. In terms of assembly, the complex is composed of two ATP-binding proteins (SsuB), two transmembrane proteins (SsuC) and a solute-binding protein (SsuA).

It localises to the cell inner membrane. The enzyme catalyses ATP + H2O + aliphatic sulfonate-[sulfonate-binding protein]Side 1 = ADP + phosphate + aliphatic sulfonateSide 2 + [sulfonate-binding protein]Side 1.. Functionally, part of the ABC transporter complex SsuABC involved in aliphatic sulfonates import. Responsible for energy coupling to the transport system. This Shigella flexneri protein is Aliphatic sulfonates import ATP-binding protein SsuB.